Reading from the N-terminus, the 68-residue chain is Agnoprotein (68 aa).

The Cytoplasmic segment spans residues 1-24 (MVLRQLSRQASVKVGKTWTGTKRR). A phosphoserine; by host mark is found at Ser7 and Ser11. Phosphothreonine; by host is present on Thr21. A helical; Signal-anchor for type II membrane protein transmembrane segment spans residues 25–41 (AQRIFIFILELLLDFCR). Residues 42–68 (GEDSVDGKKKKDSLTDKTETVTEKKES) are Extracellular-facing. A disordered region spans residues 44-68 (DSVDGKKKKDSLTDKTETVTEKKES).

This sequence belongs to the polyomavirus agnoprotein family. As to quaternary structure, homooligomer. Interacts with VP1. Interacts with large T antigen; this interaction may impact upon the activity of T-antigen on the control of viral gene transcription and replication. Interacts with small t antigen. Interacts with host CBX5; this interaction induces the dissociation of CBX5 from LBR, resulting in destabilization of the nuclear envelope. Phosphorylated by host PKC. Phosphorylation alters the stability and may also have an impact on the subcellular location.

The protein localises to the host cytoplasm. It localises to the host nucleus membrane. It is found in the host rough endoplasmic reticulum membrane. Its subcellular location is the host cell membrane. Functionally, alters the structure of the nuclear envelope by interacting with host CBX5 and disrupting CBX5 association with LBR. Involved in the perinuclear-nuclear localization of the capsid protein VP1 during virion assembly and maturation. Plays an important role in the release of progeny virions from infected cells and in viral propagation, probably by acting as a viral ionic channel in the host plasma membrane. Allows influx of extracellular calcium ions in the host cell. May contribute to viral genome transcription and translation of viral late proteins. This chain is Agnoprotein, found in Simian virus 12 (strain wt100) (SV-12).